Reading from the N-terminus, the 137-residue chain is Large-conductance mechanosensitive channel (137 aa).

The next 2 membrane-spanning stretches (helical) occupy residues V14–L34 and G81–V101.

It belongs to the MscL family. Homopentamer.

It localises to the cell membrane. Its function is as follows. Channel that opens in response to stretch forces in the membrane lipid bilayer. May participate in the regulation of osmotic pressure changes within the cell. The polypeptide is Large-conductance mechanosensitive channel (Chloroflexus aggregans (strain MD-66 / DSM 9485)).